A 65-amino-acid chain; its full sequence is Large ribosomal subunit protein bL35 (65 aa).

Residues 1–65 (MPKIKTNRAA…GRLDRMLPYL (65 aa)) form a disordered region. The segment covering 10–44 (AAKRFRKTASGKYKAGHANRSHILTKKATKRKRNL) has biased composition (basic residues). Positions 50–65 (VRAEDAGRLDRMLPYL) are enriched in basic and acidic residues.

This sequence belongs to the bacterial ribosomal protein bL35 family.

This is Large ribosomal subunit protein bL35 from Xylella fastidiosa (strain M23).